A 439-amino-acid chain; its full sequence is tRNA-2-methylthio-N(6)-dimethylallyladenosine synthase (439 aa).

Residues 2-115 (KGLYIKTYGC…LPELIVKASR (114 aa)) form the MTTase N-terminal domain. 6 residues coordinate [4Fe-4S] cluster: Cys-11, Cys-47, Cys-78, Cys-155, Cys-159, and Cys-162. Positions 141–372 (NSQGSSAFLA…QKLISKQQLE (232 aa)) constitute a Radical SAM core domain. Positions 375–439 (QSMVGKTIPV…QSSLLGCAFH (65 aa)) constitute a TRAM domain.

This sequence belongs to the methylthiotransferase family. MiaB subfamily. In terms of assembly, monomer. The cofactor is [4Fe-4S] cluster.

The protein localises to the cytoplasm. The catalysed reaction is N(6)-dimethylallyladenosine(37) in tRNA + (sulfur carrier)-SH + AH2 + 2 S-adenosyl-L-methionine = 2-methylsulfanyl-N(6)-dimethylallyladenosine(37) in tRNA + (sulfur carrier)-H + 5'-deoxyadenosine + L-methionine + A + S-adenosyl-L-homocysteine + 2 H(+). In terms of biological role, catalyzes the methylthiolation of N6-(dimethylallyl)adenosine (i(6)A), leading to the formation of 2-methylthio-N6-(dimethylallyl)adenosine (ms(2)i(6)A) at position 37 in tRNAs that read codons beginning with uridine. This Wolbachia pipientis wMel protein is tRNA-2-methylthio-N(6)-dimethylallyladenosine synthase.